A 314-amino-acid polypeptide reads, in one-letter code: Serine/threonine-protein phosphatase PP2A-5 catalytic subunit (314 aa).

4 residues coordinate Mn(2+): D62, H64, D90, and N122. Residue H123 is the Proton donor of the active site. Residues H172 and H246 each coordinate Mn(2+).

This sequence belongs to the PPP phosphatase family. PP-2A subfamily. Mn(2+) serves as cofactor.

The protein localises to the cytoplasm. The enzyme catalyses O-phospho-L-seryl-[protein] + H2O = L-seryl-[protein] + phosphate. It carries out the reaction O-phospho-L-threonyl-[protein] + H2O = L-threonyl-[protein] + phosphate. The chain is Serine/threonine-protein phosphatase PP2A-5 catalytic subunit (NPP5) from Nicotiana tabacum (Common tobacco).